Here is a 367-residue protein sequence, read N- to C-terminus: Peptide chain release factor 2 (367 aa).

Glutamine 250 is subject to N5-methylglutamine.

It belongs to the prokaryotic/mitochondrial release factor family. Post-translationally, methylated by PrmC. Methylation increases the termination efficiency of RF2.

It is found in the cytoplasm. Peptide chain release factor 2 directs the termination of translation in response to the peptide chain termination codons UGA and UAA. In Saccharopolyspora erythraea (strain ATCC 11635 / DSM 40517 / JCM 4748 / NBRC 13426 / NCIMB 8594 / NRRL 2338), this protein is Peptide chain release factor 2.